A 207-amino-acid chain; its full sequence is Flavin-dependent thymidylate synthase (207 aa).

Residues 1 to 204 enclose the ThyX domain; the sequence is MQITLLFHTP…KFIFEHCLHK (204 aa). FAD contacts are provided by residues Ser-50 and 74 to 76; that span reads RHR. DUMP contacts are provided by residues 71 to 74, 84 to 86, and Lys-143; these read EVAR and STR. A ThyX motif motif is present at residues 74-84; it reads RHRHTSPSVKS. FAD contacts are provided by residues 159–161 and Asn-165; that span reads NAR. Arg-170 is a binding site for dUMP. Arg-170 functions as the Involved in ionization of N3 of dUMP, leading to its activation in the catalytic mechanism.

It belongs to the thymidylate synthase ThyX family. In terms of assembly, homotetramer. The cofactor is FAD.

The enzyme catalyses dUMP + (6R)-5,10-methylene-5,6,7,8-tetrahydrofolate + NADPH + H(+) = dTMP + (6S)-5,6,7,8-tetrahydrofolate + NADP(+). Its pathway is pyrimidine metabolism; dTTP biosynthesis. Catalyzes the reductive methylation of 2'-deoxyuridine-5'-monophosphate (dUMP) to 2'-deoxythymidine-5'-monophosphate (dTMP) while utilizing 5,10-methylenetetrahydrofolate (mTHF) as the methyl donor, and NADPH and FADH(2) as the reductant. This Campylobacter jejuni subsp. jejuni serotype O:2 (strain ATCC 700819 / NCTC 11168) protein is Flavin-dependent thymidylate synthase.